Reading from the N-terminus, the 92-residue chain is Small ribosomal subunit protein uS19c (92 aa).

This sequence belongs to the universal ribosomal protein uS19 family.

Its subcellular location is the plastid. In terms of biological role, protein S19 forms a complex with S13 that binds strongly to the 16S ribosomal RNA. The chain is Small ribosomal subunit protein uS19c from Cuscuta exaltata (Tall dodder).